The following is a 147-amino-acid chain: Large ribosomal subunit protein uL11 (147 aa).

It belongs to the universal ribosomal protein uL11 family. In terms of assembly, part of the ribosomal stalk of the 50S ribosomal subunit. Interacts with L10 and the large rRNA to form the base of the stalk. L10 forms an elongated spine to which L12 dimers bind in a sequential fashion forming a multimeric L10(L12)X complex. In terms of processing, one or more lysine residues are methylated.

Its function is as follows. Forms part of the ribosomal stalk which helps the ribosome interact with GTP-bound translation factors. The protein is Large ribosomal subunit protein uL11 of Cytophaga hutchinsonii (strain ATCC 33406 / DSM 1761 / CIP 103989 / NBRC 15051 / NCIMB 9469 / D465).